A 209-amino-acid chain; its full sequence is Imidazole glycerol phosphate synthase subunit HisH (209 aa).

The 207-residue stretch at 3 to 209 (KIGLIDYGMG…WINWLKKNKF (207 aa)) folds into the Glutamine amidotransferase type-1 domain. The active-site Nucleophile is Cys81. Residues His185 and Glu187 contribute to the active site.

Heterodimer of HisH and HisF.

The protein localises to the cytoplasm. The catalysed reaction is 5-[(5-phospho-1-deoxy-D-ribulos-1-ylimino)methylamino]-1-(5-phospho-beta-D-ribosyl)imidazole-4-carboxamide + L-glutamine = D-erythro-1-(imidazol-4-yl)glycerol 3-phosphate + 5-amino-1-(5-phospho-beta-D-ribosyl)imidazole-4-carboxamide + L-glutamate + H(+). It carries out the reaction L-glutamine + H2O = L-glutamate + NH4(+). It functions in the pathway amino-acid biosynthesis; L-histidine biosynthesis; L-histidine from 5-phospho-alpha-D-ribose 1-diphosphate: step 5/9. Its function is as follows. IGPS catalyzes the conversion of PRFAR and glutamine to IGP, AICAR and glutamate. The HisH subunit catalyzes the hydrolysis of glutamine to glutamate and ammonia as part of the synthesis of IGP and AICAR. The resulting ammonia molecule is channeled to the active site of HisF. The sequence is that of Imidazole glycerol phosphate synthase subunit HisH from Prochlorococcus marinus (strain NATL2A).